The chain runs to 344 residues: Gibberellin receptor GID1C (344 aa).

Ala2 is modified (N-acetylalanine). Positions His111–Gly113 match the Involved in the stabilization of the negatively charged intermediate by the formation of the oxyanion hole motif. Residues Gly113–Ser114, Tyr125, and Ser189 contribute to the gibberellin A4 site. Gibberellin A3 contacts are provided by Ser114, Tyr125, Ser189, and Phe236. Residue Ser189 is part of the active site. Asp287 is an active-site residue. Gly318 provides a ligand contact to gibberellin A4. Gly318 serves as a coordination point for gibberellin A3.

Belongs to the 'GDXG' lipolytic enzyme family. As to quaternary structure, interacts with the DELLA proteins GAI, RGA, RGL1, RGL2 and RGL3 in a GA-dependent manner. Widely expressed.

The protein localises to the nucleus. Its function is as follows. Functions as a soluble gibberellin (GA) receptor. GA is an essential hormone that regulates growth and development in plants. Binds with high affinity the biologically active gibberellin GA4, but has no affinity for the biologically inactive GAs. In response to GA, interacts with specific DELLA proteins, known as repressors of GA-induced growth, and targets them for degradation via proteasome. Seems to be required for GA signaling that controls root growth, seed germination and stem elongation. Partially redundant with GID1A and GID1B. This chain is Gibberellin receptor GID1C (GID1C), found in Arabidopsis thaliana (Mouse-ear cress).